The chain runs to 695 residues: G-protein coupled receptor-associated protein LMBRD2 (695 aa).

The Extracellular segment spans residues 1 to 5; sequence MSGAA. The helical transmembrane segment at 6–21 threads the bilayer; sequence LGLEIVFVFFLALFLL. Topologically, residues 22-32 are cytoplasmic; that stretch reads HRYGDFKKQHR. A helical membrane pass occupies residues 33-53; that stretch reads LVIIGTLLAWYLCFLIVFILP. The Extracellular segment spans residues 54–105; that stretch reads LDVSTTIYNRCKHAAANSSPPENSNITGLYATANPVPSQHPCFKPWSYIPDG. Asn78 carries N-linked (GlcNAc...) asparagine glycosylation. Residues 106–126 traverse the membrane as a helical segment; that stretch reads IMPIFWRVVYWTSQFLTWILL. The Cytoplasmic segment spans residues 127–150; the sequence is PFMQSYARSGGFSITGKIKTALIE. A helical transmembrane segment spans residues 151–171; it reads NAIYYGTYLLIFGAFLIYVAV. At 172-186 the chain is on the extracellular side; it reads NPHLHLEWNQLQTIG. Residues 187–207 form a helical membrane-spanning segment; that stretch reads IAAANTWGLFLLVLLLGYGLV. Over 208-387 the chain is Cytoplasmic; sequence EIPRSYWNGA…ECLLRPWFYK (180 aa). Residues 227 to 262 adopt a coiled-coil conformation; that stretch reads YFKAAKLMTEKADAEENLEDAMEEVRKVNESIKYNH. Residues 388–408 traverse the membrane as a helical segment; sequence ILAVVLSIFSVIVVWSECTFF. The Extracellular portion of the chain corresponds to 409–432; that stretch reads STTPVLSLFAVFIQLAEKTYNYIY. A helical membrane pass occupies residues 433–453; that stretch reads IEIACFLSIFFLSICVYSTVF. The Cytoplasmic segment spans residues 454 to 473; the sequence is RIRVFNYYYLASHHQTDAYS. Residues 474–494 traverse the membrane as a helical segment; the sequence is LLFSGMLFCRLTPPLCLNFLG. Over 495–521 the chain is Extracellular; that stretch reads LTHMDSSISHKNTQPTAYTSIMGSMKV. A helical transmembrane segment spans residues 522-542; it reads LSFIADGFYIYYPMLVVILCI. At 543–695 the chain is on the cytoplasmic side; the sequence is ATYFSLGTRC…MSRSDIFNDV (153 aa). Residues 571–603 adopt a coiled-coil conformation; that stretch reads LVNEGKELIRKEKRKRQRQEEGENRRREWKERY. Residues 581–628 form a disordered region; it reads KEKRKRQRQEEGENRRREWKERYGHNREDSTRNRNIHTDPKESNFSDV. Over residues 588–624 the composition is skewed to basic and acidic residues; that stretch reads RQEEGENRRREWKERYGHNREDSTRNRNIHTDPKESN. Ser633 is subject to Phosphoserine. Residues 662-682 form a disordered region; it reads AETFTDDPLESESGRYQPGGR.

It belongs to the LIMR family.

It localises to the cell membrane. Recruited to ligand-activated beta-2 adrenergic receptor/ADRB2, it negatively regulates the adrenergic receptor signaling pathway. May also regulate other G-protein coupled receptors including type-1 angiotensin II receptor/AGTR1. In Homo sapiens (Human), this protein is G-protein coupled receptor-associated protein LMBRD2.